A 464-amino-acid chain; its full sequence is Molybdate transporter 2 (464 aa).

The Tonoplast targeting signal signature appears at 8–9 (LL). 9 consecutive transmembrane segments (helical) span residues 33–53 (LSGA…LTLV), 62–82 (LIFT…PMPV), 116–136 (LLLG…LPVV), 172–192 (IWLG…IILS), 223–243 (LLSS…LCFI), 309–329 (VSIS…MPVC), 348–368 (SVIF…NSFV), 374–394 (FPIG…AMAS), and 404–424 (FIML…LGFG).

The protein belongs to the SLC26A/SulP transporter (TC 2.A.53) family. In terms of tissue distribution, expressed in leaves. Not detected in roots, shoots and seeds.

The protein localises to the vacuole membrane. In terms of biological role, molybdate transporter required for vacuolar molybdate export during senescence. The chain is Molybdate transporter 2 (MOT2) from Arabidopsis thaliana (Mouse-ear cress).